Reading from the N-terminus, the 153-residue chain is Superoxide dismutase [Cu-Zn] (153 aa).

The Cu cation site is built by H45, H47, and H62. A disulfide bond links C56 and C145. Zn(2+) contacts are provided by H62, H70, H79, and D82. H119 is a Cu cation binding site.

This sequence belongs to the Cu-Zn superoxide dismutase family. In terms of assembly, homodimer. Cu cation is required as a cofactor. The cofactor is Zn(2+).

Its subcellular location is the cytoplasm. It carries out the reaction 2 superoxide + 2 H(+) = H2O2 + O2. Its function is as follows. Destroys radicals which are normally produced within the cells and which are toxic to biological systems. This is Superoxide dismutase [Cu-Zn] from Drosophila teissieri (Fruit fly).